We begin with the raw amino-acid sequence, 447 residues long: N-succinylarginine dihydrolase (447 aa).

Substrate-binding positions include 19-28 (AGLSFGNEAS), Asn110, and 137-138 (HR). Residue Glu174 is part of the active site. Substrate is bound at residue Arg212. His248 is a catalytic residue. Substrate-binding residues include Asp250 and Asn359. Cys365 functions as the Nucleophile in the catalytic mechanism.

It belongs to the succinylarginine dihydrolase family. As to quaternary structure, homodimer.

The catalysed reaction is N(2)-succinyl-L-arginine + 2 H2O + 2 H(+) = N(2)-succinyl-L-ornithine + 2 NH4(+) + CO2. It participates in amino-acid degradation; L-arginine degradation via AST pathway; L-glutamate and succinate from L-arginine: step 2/5. Catalyzes the hydrolysis of N(2)-succinylarginine into N(2)-succinylornithine, ammonia and CO(2). The polypeptide is N-succinylarginine dihydrolase (Salmonella paratyphi A (strain ATCC 9150 / SARB42)).